A 162-amino-acid chain; its full sequence is Large ribosomal subunit protein uL11 (162 aa).

The interval 1–27 is disordered; it reads MAGTIEVLVPGGEANPGPPLGPELGPT.

Belongs to the universal ribosomal protein uL11 family. In terms of assembly, part of the 50S ribosomal subunit. Forms part of the ribosomal stalk which helps the ribosome interact with GTP-bound translation factors. Forms a heptameric L10(L12)2(L12)2(L12)2 complex, where L10 forms an elongated spine to which 3 L12 dimers bind in a sequential fashion.

In terms of biological role, forms part of the ribosomal stalk which helps the ribosome interact with GTP-bound translation factors. The polypeptide is Large ribosomal subunit protein uL11 (Haloarcula marismortui (strain ATCC 43049 / DSM 3752 / JCM 8966 / VKM B-1809) (Halobacterium marismortui)).